A 229-amino-acid chain; its full sequence is Heptaprenylglyceryl phosphate synthase (229 aa).

Sn-glycerol 1-phosphate is bound at residue K12. Residues D14 and S40 each contribute to the Mg(2+) site. Sn-glycerol 1-phosphate is bound by residues 159 to 164 (YLEYSG), G189, and 209 to 210 (GN).

This sequence belongs to the GGGP/HepGP synthase family. Group I subfamily. As to quaternary structure, homodimer. Requires Mg(2+) as cofactor.

The catalysed reaction is sn-glycerol 1-phosphate + all-trans-heptaprenyl diphosphate = 3-heptaprenyl-sn-glycero-1-phosphate + diphosphate. It functions in the pathway membrane lipid metabolism; glycerophospholipid metabolism. Functionally, prenyltransferase that catalyzes in vivo the transfer of the heptaprenyl moiety of heptaprenyl pyrophosphate (HepPP; 35 carbon atoms) to the C3 hydroxyl of sn-glycerol-1-phosphate (G1P), producing heptaprenylglyceryl phosphate (HepGP). This reaction is an ether-bond-formation step in the biosynthesis of archaea-type G1P-based membrane lipids found in Bacillales. This chain is Heptaprenylglyceryl phosphate synthase, found in Bacillus cereus (strain ZK / E33L).